The following is a 206-amino-acid chain: LexA repressor (206 aa).

The H-T-H motif DNA-binding region spans 28 to 48 (RAEIATRLGFKSANAAEEHLK). Active-site for autocatalytic cleavage activity residues include Ser-123 and Lys-160.

This sequence belongs to the peptidase S24 family. As to quaternary structure, homodimer.

The catalysed reaction is Hydrolysis of Ala-|-Gly bond in repressor LexA.. Its function is as follows. Represses a number of genes involved in the response to DNA damage (SOS response), including recA and lexA. In the presence of single-stranded DNA, RecA interacts with LexA causing an autocatalytic cleavage which disrupts the DNA-binding part of LexA, leading to derepression of the SOS regulon and eventually DNA repair. The sequence is that of LexA repressor from Shewanella sp. (strain MR-4).